The following is a 152-amino-acid chain: Small ribosomal subunit protein uS11A (152 aa).

Residues 131-152 (EDVTPIPSDSTRRKGGRRGRRL) form a disordered region. The span at 143–152 (RKGGRRGRRL) shows a compositional bias: basic residues.

This sequence belongs to the universal ribosomal protein uS11 family.

In Anopheles gambiae (African malaria mosquito), this protein is Small ribosomal subunit protein uS11A.